Here is a 28-residue protein sequence, read N- to C-terminus: Probable small spore coat assembly protein B (28 aa).

A helical membrane pass occupies residues 4–24 (VFAGGFALLVVLFILLIIIGA).

Belongs to the SscA family.

It localises to the membrane. In Bacillus subtilis (strain 168), this protein is Probable small spore coat assembly protein B.